A 22-amino-acid polypeptide reads, in one-letter code: Mu-conotoxin MIIIA (22 aa).

Residue Gln1 is modified to Pyrrolidone carboxylic acid. Intrachain disulfides connect Cys3–Cys15, Cys4–Cys21, and Cys10–Cys22. At Cys22 the chain carries Cysteine amide.

The protein belongs to the conotoxin M superfamily. In terms of tissue distribution, expressed by the venom duct.

It is found in the secreted. Functionally, mu-conotoxins block voltage-gated sodium channels (Nav). This synthetic toxin potently blocks rNav1.3/SCN3A. It also moderately blocks rNav1.1/SCN1A, rNav1.2/SCN2A, rNav1.4/SCN4A, mNav1.6/SCN8A, and Nav1.7/SCN9A. sodium channels. This block is very slowly reversible. This chain is Mu-conotoxin MIIIA, found in Conus magus (Magical cone).